Here is a 465-residue protein sequence, read N- to C-terminus: MQIFDSVQKTKVTFEPIREGEASIYVCGPTVYDDAHLGHARSSLAFDLLSRTLKALGYKVIMAKNFTDIDDKIIKKVEETGKSMQEITSYYIQRYLDEMEQLGVQRADIEPKATESLDAIEQMIQTLIDKDFAYVVSNGDVYFDTSKDSHYGDISHKVSDDDTQSRVEHNSEKRNPRDFALWKACKGEEDICFGAPFSSGRPGWHIECSAMIEKYFKGNGQYSIDIHGGGADLLFPHHENEAAQSRCATGHELAKYWMHNGFVQINGEKMSKSLGNSFFLKDALEVYGGEVLRYYLNSVHYRNDFNFNEEDLQTAKKRLDKLYRLKKRVLPGKASTVNKAFKQALLNAMSDDLNISIALAVIDEMIAETNEKLDTDPKNKALKKETIANIEFIDTLLGFGGKEPFSYFQIGVDEALKEKIEILLQERTEAKKAKDFATSDAIRNELIDMGISIMDTAEGTVWEKA.

Position 27 (Cys-27) interacts with Zn(2+). Positions 29 to 39 (PTVYDDAHLGH) match the 'HIGH' region motif. The interval 153 to 173 (DISHKVSDDDTQSRVEHNSEK) is disordered. Zn(2+) contacts are provided by Cys-208, His-237, and Glu-241. The 'KMSKS' region motif lies at 269–273 (KMSKS). Lys-272 is an ATP binding site.

The protein belongs to the class-I aminoacyl-tRNA synthetase family. In terms of assembly, monomer. Zn(2+) serves as cofactor.

The protein localises to the cytoplasm. The catalysed reaction is tRNA(Cys) + L-cysteine + ATP = L-cysteinyl-tRNA(Cys) + AMP + diphosphate. The chain is Cysteine--tRNA ligase from Sulfurovum sp. (strain NBC37-1).